The sequence spans 854 residues: pH-response regulator protein palA/prr-1 (854 aa).

The BRO1 domain occupies 5 to 402; that stretch reads HVLSLPFRKS…SELESMTSQL (398 aa). The stretch at 632-699 forms a coiled coil; that stretch reads RLDRLYESEL…DAAYYKYKEI (68 aa). 2 disordered regions span residues 739 to 782 and 801 to 854; these read EEEI…EPIQ and PQQQ…IRFG. Residues 746–759 show a composition bias toward polar residues; that stretch reads PLSSLNMHQSSFSY. The segment covering 767-782 has biased composition (pro residues); that stretch reads QPPPPPPQIPFPEPIQ. Positions 827 to 839 are enriched in low complexity; that stretch reads QGQQHQQEQGQPG.

It belongs to the palA/RIM20 family. In terms of assembly, interacts with pacc-1 by binding to its two YPX[LI] motifs.

Required for the proteolytic cleavage of the transcription factor pacc-1 in response to alkaline ambient pH. May act as a scaffold protein that recruits the calpain-like protease palB/cpr-8 via snf7/vps-3 to its substrate pacc-1. The protein is pH-response regulator protein palA/prr-1 (prr-1) of Neurospora crassa (strain ATCC 24698 / 74-OR23-1A / CBS 708.71 / DSM 1257 / FGSC 987).